The sequence spans 251 residues: Ubiquinone/menaquinone biosynthesis C-methyltransferase UbiE (251 aa).

Residues Thr-74, Asp-95, and 123 to 124 each bind S-adenosyl-L-methionine; that span reads NA.

It belongs to the class I-like SAM-binding methyltransferase superfamily. MenG/UbiE family.

It catalyses the reaction a 2-demethylmenaquinol + S-adenosyl-L-methionine = a menaquinol + S-adenosyl-L-homocysteine + H(+). It carries out the reaction a 2-methoxy-6-(all-trans-polyprenyl)benzene-1,4-diol + S-adenosyl-L-methionine = a 5-methoxy-2-methyl-3-(all-trans-polyprenyl)benzene-1,4-diol + S-adenosyl-L-homocysteine + H(+). It functions in the pathway quinol/quinone metabolism; menaquinone biosynthesis; menaquinol from 1,4-dihydroxy-2-naphthoate: step 2/2. The protein operates within cofactor biosynthesis; ubiquinone biosynthesis. Methyltransferase required for the conversion of demethylmenaquinol (DMKH2) to menaquinol (MKH2) and the conversion of 2-polyprenyl-6-methoxy-1,4-benzoquinol (DDMQH2) to 2-polyprenyl-3-methyl-6-methoxy-1,4-benzoquinol (DMQH2). This is Ubiquinone/menaquinone biosynthesis C-methyltransferase UbiE from Shewanella oneidensis (strain ATCC 700550 / JCM 31522 / CIP 106686 / LMG 19005 / NCIMB 14063 / MR-1).